The following is a 1114-amino-acid chain: Mediator of RNA polymerase II transcription subunit 14 (1114 aa).

3 disordered regions span residues 1–27 (MPGV…QDGL), 40–79 (ANAQ…GPPE), and 120–141 (HGIH…SPGN). Residues 126–140 (TAPTTGKSPGNQSPG) are compositionally biased toward polar residues.

Belongs to the Mediator complex subunit 14 family. As to quaternary structure, component of the Mediator complex.

It is found in the nucleus. In terms of biological role, component of the Mediator complex, a coactivator involved in the regulated transcription of nearly all RNA polymerase II-dependent genes. Mediator functions as a bridge to convey information from gene-specific regulatory proteins to the basal RNA polymerase II transcription machinery. Mediator is recruited to promoters by direct interactions with regulatory proteins and serves as a scaffold for the assembly of a functional preinitiation complex with RNA polymerase II and the general transcription factors. The sequence is that of Mediator of RNA polymerase II transcription subunit 14 (rgr1) from Aspergillus niger (strain ATCC MYA-4892 / CBS 513.88 / FGSC A1513).